The sequence spans 32 residues: Mu-theraphotoxin-Se1a (32 aa).

Cystine bridges form between Cys2-Cys17, Cys9-Cys22, and Cys16-Cys28.

The protein belongs to the neurotoxin 10 (Hwtx-1) family. As to expression, expressed by the venom gland.

It is found in the secreted. In terms of biological role, voltage-gated sodium channel Nav1.7/SCN9A inhibitor. The polypeptide is Mu-theraphotoxin-Se1a (Selenocosmia effera (Tarantula spider)).